A 271-amino-acid polypeptide reads, in one-letter code: Replication-associated protein A (271 aa).

Positions 11–114 (LHRNANTFLT…PLAVFERGTF (104 aa)) constitute a CRESS-DNA virus Rep endonuclease domain. The RCR-1 motif lies at 18–21 (FLTY). The a divalent metal cation site is built by Glu52, His60, and His62. The RCR-2 signature appears at 60–62 (HLH). The active-site For DNA cleavage activity is the Tyr100. The short motif at 100–103 (YILK) is the RCR-3 element. Residue Glu104 coordinates a divalent metal cation. The interval 174–186 (SANKLFPDIQEEF) is oligomerization. The segment at 197-201 (LLCNE) is binding to RBR1. The transactivation stretch occupies residues 220 to 229 (MLLQPTCYTV). Residues 244 to 264 (SQQMKDQESRASTSSVQQGQG) show a composition bias toward polar residues. A disordered region spans residues 244–271 (SQQMKDQESRASTSSVQQGQGNLLGPEV).

It belongs to the geminiviridae Rep protein family. As to quaternary structure, homooligomer. Interacts with host retinoblastoma-related protein 1 (RBR1), and may thereby deregulate the host cell cycle. Part of the C- and V-complexes which are RepA-Rep-DNA complexes involved in the c-sense and v-sense transcription. Requires Mg(2+) as cofactor. It depends on Mn(2+) as a cofactor.

The protein resides in the host nucleus. It localises to the host cytoplasm. Its function is as follows. Implicated in enhancement of V-sense gene expression. Acts a an inhibitor of C-sense gene transcription. In Avena sativa (Oat), this protein is Replication-associated protein A.